The primary structure comprises 447 residues: Argininosuccinate lyase (447 aa).

The protein belongs to the lyase 1 family. Argininosuccinate lyase subfamily.

Its subcellular location is the cytoplasm. The catalysed reaction is 2-(N(omega)-L-arginino)succinate = fumarate + L-arginine. Its pathway is amino-acid biosynthesis; L-arginine biosynthesis; L-arginine from L-ornithine and carbamoyl phosphate: step 3/3. This Bacteroides fragilis (strain ATCC 25285 / DSM 2151 / CCUG 4856 / JCM 11019 / LMG 10263 / NCTC 9343 / Onslow / VPI 2553 / EN-2) protein is Argininosuccinate lyase.